The primary structure comprises 701 residues: Elongation factor G (701 aa).

A tr-type G domain is found at 11–287 (TKVRNIGIMA…AVIDYLPSPL (277 aa)). GTP contacts are provided by residues 20 to 27 (AHIDAGKT), 84 to 88 (DTPGH), and 138 to 141 (NKMD).

It belongs to the TRAFAC class translation factor GTPase superfamily. Classic translation factor GTPase family. EF-G/EF-2 subfamily.

It localises to the cytoplasm. Functionally, catalyzes the GTP-dependent ribosomal translocation step during translation elongation. During this step, the ribosome changes from the pre-translocational (PRE) to the post-translocational (POST) state as the newly formed A-site-bound peptidyl-tRNA and P-site-bound deacylated tRNA move to the P and E sites, respectively. Catalyzes the coordinated movement of the two tRNA molecules, the mRNA and conformational changes in the ribosome. This Mycobacterium avium (strain 104) protein is Elongation factor G.